We begin with the raw amino-acid sequence, 500 residues long: Glycerol kinase (500 aa).

T14 contributes to the ADP binding site. T14, T15, and S16 together coordinate ATP. T14 contacts sn-glycerol 3-phosphate. R18 contributes to the ADP binding site. Sn-glycerol 3-phosphate is bound by residues R84, E85, and Y136. Glycerol-binding residues include R84, E85, and Y136. H232 is subject to Phosphohistidine; by HPr. D246 provides a ligand contact to sn-glycerol 3-phosphate. Positions 246 and 247 each coordinate glycerol. ADP-binding residues include T268 and G311. 4 residues coordinate ATP: T268, G311, Q315, and G412. The ADP site is built by G412 and N416.

Belongs to the FGGY kinase family. As to quaternary structure, homotetramer and homodimer (in equilibrium). In terms of processing, the phosphoenolpyruvate-dependent sugar phosphotransferase system (PTS), including enzyme I, and histidine-containing protein (HPr) are required for the phosphorylation, which leads to the activation of the enzyme.

It catalyses the reaction glycerol + ATP = sn-glycerol 3-phosphate + ADP + H(+). It participates in polyol metabolism; glycerol degradation via glycerol kinase pathway; sn-glycerol 3-phosphate from glycerol: step 1/1. Activated by phosphorylation and inhibited by fructose 1,6-bisphosphate (FBP). Its function is as follows. Key enzyme in the regulation of glycerol uptake and metabolism. Catalyzes the phosphorylation of glycerol to yield sn-glycerol 3-phosphate. The polypeptide is Glycerol kinase (Limosilactobacillus reuteri (strain DSM 20016) (Lactobacillus reuteri)).